The following is a 124-amino-acid chain: MaFF-interacting protein (124 aa).

A coiled-coil region spans residues 54–96; the sequence is LVSEVEELYKSITALREKLLQAEQSLRNLKDIHMSLEKDVTAM.

It belongs to the tektin family. In terms of assembly, interacts with MIS18A. Interacts (via its coiled-coil region) with MAFF. As to expression, strongly expressed in brain, kidney and ovary. Moderately expressed in liver, spleen, thymus, prostate, testis, small intestine and colon. Weakly expressed in heart, placenta, lung and leukocytes.

The protein resides in the cytoplasm. It localises to the nucleus. Its subcellular location is the nucleolus. Functionally, acts as a coactivator of MAFF transcriptional activity. Inhibits cell growth and colony-forming efficiency. In Homo sapiens (Human), this protein is MaFF-interacting protein (MAFIP).